Here is a 292-residue protein sequence, read N- to C-terminus: NAD kinase (292 aa).

Asp-73 functions as the Proton acceptor in the catalytic mechanism. NAD(+) contacts are provided by residues 73–74, 147–148, His-158, Arg-175, Asp-177, 188–193, and Gln-247; these read DG, NE, and TAYSLS.

It belongs to the NAD kinase family. A divalent metal cation is required as a cofactor.

Its subcellular location is the cytoplasm. The catalysed reaction is NAD(+) + ATP = ADP + NADP(+) + H(+). In terms of biological role, involved in the regulation of the intracellular balance of NAD and NADP, and is a key enzyme in the biosynthesis of NADP. Catalyzes specifically the phosphorylation on 2'-hydroxyl of the adenosine moiety of NAD to yield NADP. This chain is NAD kinase, found in Escherichia coli (strain UTI89 / UPEC).